The sequence spans 257 residues: uncharacterized protein (257 aa).

An N-terminal signal peptide occupies residues Met1–Gly22. Cys23 carries the N-palmitoyl cysteine lipid modification. Residue Cys23 is the site of S-diacylglycerol cysteine attachment.

The protein belongs to the staphylococcal tandem lipoprotein family.

It is found in the cell membrane. This is an uncharacterized protein from Staphylococcus aureus (strain N315).